The chain runs to 259 residues: Polycomb group RING finger protein 1 (259 aa).

A2 carries the post-translational modification N-acetylalanine. S3 carries the post-translational modification Phosphoserine. A Glycyl lysine isopeptide (Lys-Gly) (interchain with G-Cter in SUMO2) cross-link involves residue K24. An RING-type zinc finger spans residues C47–N86. The interval N86 to P247 is necessary for repressor activity. Residue K88 forms a Glycyl lysine isopeptide (Lys-Gly) (interchain with G-Cter in SUMO2) linkage. Residues L150–K255 form a required for the interaction with the KDM2B-SKP1 heterodimeric complex region. The RING-finger and WD40-associated ubiquitin-like domain (RAWUL); sufficient for interaction with BCOR and BCORL1 stretch occupies residues E167–K255.

As to quaternary structure, interacts with BCORL1, forming heterodimers. The PCGF1-BCORL1 heterodimeric complex interacts with the KDM2B-SKP1 heterodimeric complex to form a homotetrameric polycomb repression complex 1 (PRC1.1). Component of the repressive BCOR complex containing a Polycomb group subcomplex at least composed of RYBP, RING1 and RNF2/RING2. Specifically interacts with BCOR, RING1 and RNF2/RING2. Component of a PRC1-like complex. Interacts with CBX6, CBX7 and CBX8. Interacts with DPPA4, NANOG, POU5F1 and RYBP.

It localises to the nucleus. Its function is as follows. Component of the Polycomb group (PcG) multiprotein BCOR complex, a complex required to maintain the transcriptionally repressive state of some genes, such as BCL6 and the cyclin-dependent kinase inhibitor, CDKN1A. Transcriptional repressor that may be targeted to the DNA by BCL6; this transcription repressor activity may be related to PKC signaling pathway. Represses CDKN1A expression by binding to its promoter, and this repression is dependent on the retinoic acid response element (RARE element). Promotes cell cycle progression and enhances cell proliferation as well. May have a positive role in tumor cell growth by down-regulating CDKN1A. Component of a Polycomb group (PcG) multiprotein PRC1-like complex, a complex class required to maintain the transcriptionally repressive state of many genes, including Hox genes, throughout development. PcG PRC1 complex acts via chromatin remodeling and modification of histones; it mediates monoubiquitination of histone H2A 'Lys-119', rendering chromatin heritably changed in its expressibility. Within the PRC1-like complex, regulates RNF2 ubiquitin ligase activity. Regulates the expression of DPPA4 and NANOG in the NT2 embryonic carcinoma cells. The sequence is that of Polycomb group RING finger protein 1 (Pcgf1) from Mus musculus (Mouse).